We begin with the raw amino-acid sequence, 241 residues long: Uridylate kinase (241 aa).

Residue 12–15 (KVSG) coordinates ATP. The segment at 20 to 25 (GEKGTG) is involved in allosteric activation by GTP. G54 provides a ligand contact to UMP. ATP is bound by residues G55 and R59. UMP is bound by residues D74 and 135–142 (TGNPYFST). The ATP site is built by N163, Y169, and D172.

The protein belongs to the UMP kinase family. In terms of assembly, homohexamer.

The protein resides in the cytoplasm. It catalyses the reaction UMP + ATP = UDP + ADP. It participates in pyrimidine metabolism; CTP biosynthesis via de novo pathway; UDP from UMP (UMPK route): step 1/1. Its activity is regulated as follows. Allosterically activated by GTP. Inhibited by UTP. Catalyzes the reversible phosphorylation of UMP to UDP. The protein is Uridylate kinase of Lactobacillus johnsonii (strain CNCM I-12250 / La1 / NCC 533).